Here is a 287-residue protein sequence, read N- to C-terminus: Homoserine kinase (287 aa).

78-88 (PLAHGLGSSSS) is an ATP binding site.

It belongs to the GHMP kinase family. Homoserine kinase subfamily.

It localises to the cytoplasm. It carries out the reaction L-homoserine + ATP = O-phospho-L-homoserine + ADP + H(+). Its pathway is amino-acid biosynthesis; L-threonine biosynthesis; L-threonine from L-aspartate: step 4/5. Functionally, catalyzes the ATP-dependent phosphorylation of L-homoserine to L-homoserine phosphate. The sequence is that of Homoserine kinase from Lactobacillus acidophilus (strain ATCC 700396 / NCK56 / N2 / NCFM).